The following is a 414-amino-acid chain: Putative cytochrome P450 126 (414 aa).

C363 provides a ligand contact to heme.

Belongs to the cytochrome P450 family. It depends on heme as a cofactor.

The sequence is that of Putative cytochrome P450 126 (cyp126) from Mycobacterium tuberculosis (strain CDC 1551 / Oshkosh).